The chain runs to 134 residues: Global transcriptional regulator Spx (134 aa).

A disulfide bridge connects residues C10 and C13.

This sequence belongs to the ArsC family. Spx subfamily. As to quaternary structure, interacts with the C-terminal domain of the alpha subunit of the RNAP.

The protein localises to the cytoplasm. Functionally, global transcriptional regulator that plays a key role in stress response and exerts either positive or negative regulation of genes. Acts by interacting with the C-terminal domain of the alpha subunit of the RNA polymerase (RNAP). This interaction can enhance binding of RNAP to the promoter region of target genes and stimulate their transcription, or block interaction of RNAP with activator. The polypeptide is Global transcriptional regulator Spx (Streptococcus pyogenes serotype M3 (strain ATCC BAA-595 / MGAS315)).